The sequence spans 215 residues: Cytochrome b6 (215 aa).

The chain crosses the membrane as a helical span at residues 32–52 (IFYCLGGITLTCFLVQVATGF). Cys-35 contributes to the heme c binding site. Heme b contacts are provided by His-86 and His-100. The next 3 membrane-spanning stretches (helical) occupy residues 90-110 (ASMM…TGGF), 116-136 (LTWV…VTGY), and 186-206 (LHTF…FPMI). 2 residues coordinate heme b: His-187 and His-202.

It belongs to the cytochrome b family. PetB subfamily. In terms of assembly, the 4 large subunits of the cytochrome b6-f complex are cytochrome b6, subunit IV (17 kDa polypeptide, PetD), cytochrome f and the Rieske protein, while the 4 small subunits are PetG, PetL, PetM and PetN. The complex functions as a dimer. Heme b serves as cofactor. It depends on heme c as a cofactor.

It is found in the plastid. The protein localises to the chloroplast thylakoid membrane. In terms of biological role, component of the cytochrome b6-f complex, which mediates electron transfer between photosystem II (PSII) and photosystem I (PSI), cyclic electron flow around PSI, and state transitions. The protein is Cytochrome b6 of Vitis vinifera (Grape).